The chain runs to 119 residues: Fluoride-specific ion channel FluC 1 (119 aa).

Transmembrane regions (helical) follow at residues 6–26 (VALV…IAVV), 31–51 (FPWG…AIVY), 66–86 (VVAT…GETI), and 91–111 (RLAA…VLVA).

It belongs to the fluoride channel Fluc/FEX (TC 1.A.43) family.

The protein localises to the cell membrane. The enzyme catalyses fluoride(in) = fluoride(out). Functionally, fluoride-specific ion channel. Important for reducing fluoride concentration in the cell, thus reducing its toxicity. The polypeptide is Fluoride-specific ion channel FluC 1 (Natronomonas pharaonis (strain ATCC 35678 / DSM 2160 / CIP 103997 / JCM 8858 / NBRC 14720 / NCIMB 2260 / Gabara) (Halobacterium pharaonis)).